A 267-amino-acid chain; its full sequence is Small ribosomal subunit protein uS2 (267 aa).

Residues 1 to 72 (MSGNEKEGLD…QLDEDVMPDE (72 aa)) are disordered. Positions 10 to 72 (DASDSDFDPS…QLDEDVMPDE (63 aa)) are enriched in acidic residues.

This sequence belongs to the universal ribosomal protein uS2 family. The N-terminus is blocked.

This chain is Small ribosomal subunit protein uS2 (rps2), found in Haloarcula marismortui (strain ATCC 43049 / DSM 3752 / JCM 8966 / VKM B-1809) (Halobacterium marismortui).